We begin with the raw amino-acid sequence, 136 residues long: Ribosome-binding factor A (136 aa).

It belongs to the RbfA family. In terms of assembly, monomer. Binds 30S ribosomal subunits, but not 50S ribosomal subunits or 70S ribosomes.

It is found in the cytoplasm. Its function is as follows. One of several proteins that assist in the late maturation steps of the functional core of the 30S ribosomal subunit. Associates with free 30S ribosomal subunits (but not with 30S subunits that are part of 70S ribosomes or polysomes). Required for efficient processing of 16S rRNA. May interact with the 5'-terminal helix region of 16S rRNA. The polypeptide is Ribosome-binding factor A (Photorhabdus laumondii subsp. laumondii (strain DSM 15139 / CIP 105565 / TT01) (Photorhabdus luminescens subsp. laumondii)).